A 286-amino-acid chain; its full sequence is Putative short-chain type dehydrogenase/reductase Rv0148 (286 aa).

Residue 11-35 (VTGAGGGLGREYALTLAGEGASVVV) participates in NAD(+) binding. A substrate-binding site is contributed by Ser-151. Residue Tyr-164 is the Proton acceptor of the active site. Lys-280 participates in a covalent cross-link: Isoglutamyl lysine isopeptide (Lys-Gln) (interchain with Q-Cter in protein Pup).

The protein belongs to the short-chain dehydrogenases/reductases (SDR) family. Pupylated at Lys-280 by the prokaryotic ubiquitin-like protein Pup, which probably leads to its degradation by the proteasome.

The chain is Putative short-chain type dehydrogenase/reductase Rv0148 from Mycobacterium tuberculosis (strain ATCC 25618 / H37Rv).